The following is a 384-amino-acid chain: Spermatogenesis-associated protein 32 (384 aa).

The disordered stretch occupies residues R23–P60. A phosphoserine mark is found at S167 and S170. Disordered regions lie at residues D211–L232, V284–W310, and L340–N366. Low complexity predominate over residues S214–D231. The span at S353–N366 shows a compositional bias: basic and acidic residues.

Interacts with syntaxin-1 and ACTB. In terms of tissue distribution, detected in testis, and on the acrosomal cap of spermatids.

The sequence is that of Spermatogenesis-associated protein 32 (SPATA32) from Homo sapiens (Human).